The chain runs to 99 residues: UPF0213 protein spr1390 (99 aa).

Positions 3-78 (HKAYMYVLEC…KRKKRPQKEE (76 aa)) constitute a GIY-YIG domain.

It belongs to the UPF0213 family.

The chain is UPF0213 protein spr1390 from Streptococcus pneumoniae (strain ATCC BAA-255 / R6).